A 186-amino-acid chain; its full sequence is ATP synthase subunit delta (186 aa).

It belongs to the ATPase delta chain family. F-type ATPases have 2 components, F(1) - the catalytic core - and F(0) - the membrane proton channel. F(1) has five subunits: alpha(3), beta(3), gamma(1), delta(1), epsilon(1). F(0) has three main subunits: a(1), b(2) and c(10-14). The alpha and beta chains form an alternating ring which encloses part of the gamma chain. F(1) is attached to F(0) by a central stalk formed by the gamma and epsilon chains, while a peripheral stalk is formed by the delta and b chains.

Its subcellular location is the cell inner membrane. In terms of biological role, f(1)F(0) ATP synthase produces ATP from ADP in the presence of a proton or sodium gradient. F-type ATPases consist of two structural domains, F(1) containing the extramembraneous catalytic core and F(0) containing the membrane proton channel, linked together by a central stalk and a peripheral stalk. During catalysis, ATP synthesis in the catalytic domain of F(1) is coupled via a rotary mechanism of the central stalk subunits to proton translocation. Functionally, this protein is part of the stalk that links CF(0) to CF(1). It either transmits conformational changes from CF(0) to CF(1) or is implicated in proton conduction. This chain is ATP synthase subunit delta, found in Ruegeria sp. (strain TM1040) (Silicibacter sp.).